A 173-amino-acid polypeptide reads, in one-letter code: Translation initiation factor IF-3 (173 aa).

The protein belongs to the IF-3 family. In terms of assembly, monomer.

The protein localises to the cytoplasm. IF-3 binds to the 30S ribosomal subunit and shifts the equilibrium between 70S ribosomes and their 50S and 30S subunits in favor of the free subunits, thus enhancing the availability of 30S subunits on which protein synthesis initiation begins. The protein is Translation initiation factor IF-3 of Phenylobacterium zucineum (strain HLK1).